Reading from the N-terminus, the 141-residue chain is Endoribonuclease YbeY (141 aa).

His107, His111, and His117 together coordinate Zn(2+).

It belongs to the endoribonuclease YbeY family. Requires Zn(2+) as cofactor.

Its subcellular location is the cytoplasm. Functionally, single strand-specific metallo-endoribonuclease involved in late-stage 70S ribosome quality control and in maturation of the 3' terminus of the 16S rRNA. The protein is Endoribonuclease YbeY of Leptospira interrogans serogroup Icterohaemorrhagiae serovar Lai (strain 56601).